A 323-amino-acid polypeptide reads, in one-letter code: tRNA U34 carboxymethyltransferase (323 aa).

Carboxy-S-adenosyl-L-methionine is bound by residues K91, W105, K110, G130, 180–181, M196, Y200, and R315; that span reads IE.

The protein belongs to the class I-like SAM-binding methyltransferase superfamily. CmoB family. As to quaternary structure, homotetramer.

It carries out the reaction carboxy-S-adenosyl-L-methionine + 5-hydroxyuridine(34) in tRNA = 5-carboxymethoxyuridine(34) in tRNA + S-adenosyl-L-homocysteine + H(+). Its function is as follows. Catalyzes carboxymethyl transfer from carboxy-S-adenosyl-L-methionine (Cx-SAM) to 5-hydroxyuridine (ho5U) to form 5-carboxymethoxyuridine (cmo5U) at position 34 in tRNAs. The protein is tRNA U34 carboxymethyltransferase of Geobacter sp. (strain M21).